The sequence spans 378 residues: UDP-N-acetylglucosamine--N-acetylmuramyl-(pentapeptide) pyrophosphoryl-undecaprenol N-acetylglucosamine transferase (378 aa).

UDP-N-acetyl-alpha-D-glucosamine-binding positions include 24 to 26 (TAG), asparagine 144, arginine 181, serine 215, and glutamine 310.

This sequence belongs to the glycosyltransferase 28 family. MurG subfamily.

The protein localises to the cell membrane. It catalyses the reaction di-trans,octa-cis-undecaprenyl diphospho-N-acetyl-alpha-D-muramoyl-L-alanyl-D-glutamyl-meso-2,6-diaminopimeloyl-D-alanyl-D-alanine + UDP-N-acetyl-alpha-D-glucosamine = di-trans,octa-cis-undecaprenyl diphospho-[N-acetyl-alpha-D-glucosaminyl-(1-&gt;4)]-N-acetyl-alpha-D-muramoyl-L-alanyl-D-glutamyl-meso-2,6-diaminopimeloyl-D-alanyl-D-alanine + UDP + H(+). It participates in cell wall biogenesis; peptidoglycan biosynthesis. Its function is as follows. Cell wall formation. Catalyzes the transfer of a GlcNAc subunit on undecaprenyl-pyrophosphoryl-MurNAc-pentapeptide (lipid intermediate I) to form undecaprenyl-pyrophosphoryl-MurNAc-(pentapeptide)GlcNAc (lipid intermediate II). This is UDP-N-acetylglucosamine--N-acetylmuramyl-(pentapeptide) pyrophosphoryl-undecaprenol N-acetylglucosamine transferase from Nocardia farcinica (strain IFM 10152).